The sequence spans 115 residues: MLVAVMIVMVIGNLLAQTAAQKIPFKECYPACLVECKAGSKFPKYLKCPFTCTKECLQQPSPPSVSSNNIDESDYFCKLGCATYHCVSLSSIQNPNVERVSACVDSCSNKCTKKN.

Positions 1–20 are cleaved as a signal peptide; that stretch reads MLVAVMIVMVIGNLLAQTAA.

This sequence belongs to the plant thionin (TC 1.C.44) family. Is disulfide-linked.

The protein resides in the secreted. In terms of biological role, may be involved in plant defense. The sequence is that of Thionin-like protein 2 from Arabidopsis thaliana (Mouse-ear cress).